The following is a 286-amino-acid chain: Large ribosomal subunit protein uL3 (286 aa).

The residue at position 152 (Q152) is an N5-methylglutamine. Residues 246 to 265 show a composition bias toward low complexity; sequence EAAAAAAAAEEQAAMEAAEA. The interval 246-286 is disordered; the sequence is EAAAAAAAAEEQAAMEAAEAAEAKTDTVAEAEAAEKKEGDA. Positions 266 to 286 are enriched in basic and acidic residues; it reads AEAKTDTVAEAEAAEKKEGDA.

This sequence belongs to the universal ribosomal protein uL3 family. In terms of assembly, part of the 50S ribosomal subunit. Forms a cluster with proteins L14 and L19. Methylated by PrmB.

Functionally, one of the primary rRNA binding proteins, it binds directly near the 3'-end of the 23S rRNA, where it nucleates assembly of the 50S subunit. The protein is Large ribosomal subunit protein uL3 of Roseobacter denitrificans (strain ATCC 33942 / OCh 114) (Erythrobacter sp. (strain OCh 114)).